Consider the following 715-residue polypeptide: Probable serine/threonine-protein kinase mkcE (715 aa).

Disordered stretches follow at residues 1–125 (MQKI…SQHQ), 228–330 (QLQQ…TTTT), and 366–385 (GVDNLSSTTTSLSQNPPIQP). Gly residues predominate over residues 42 to 53 (YDGGGSGSGSGG). Composition is skewed to low complexity over residues 54–70 (SSSNSSGSSRKINTGGN) and 80–125 (SPSN…SQHQ). Residues 207 to 241 (TGKKNFQQQQLQQLQQQQQQQQLQQQQHQQHNHQI) are a coiled coil. Low complexity predominate over residues 367–378 (VDNLSSTTTSLS). Residues 427 to 683 (RIGENAEVKG…PTQLLQHPFI (257 aa)) enclose the Protein kinase domain. ATP is bound by residues 433–441 (EVKGAFGTV) and K459. Residue D550 is the Proton acceptor of the active site.

The protein belongs to the protein kinase superfamily. STE Ser/Thr protein kinase family. STE20 subfamily. Mg(2+) serves as cofactor.

It carries out the reaction L-seryl-[protein] + ATP = O-phospho-L-seryl-[protein] + ADP + H(+). The catalysed reaction is L-threonyl-[protein] + ATP = O-phospho-L-threonyl-[protein] + ADP + H(+). The polypeptide is Probable serine/threonine-protein kinase mkcE (Dictyostelium discoideum (Social amoeba)).